Consider the following 371-residue polypeptide: Flagellar P-ring protein (371 aa).

An N-terminal signal peptide occupies residues 1–24 (MSIRVLLFSIFTGFLLAAAGPALA). The segment covering 301 to 321 (PQPFSSGTTATQPQTDISAQK) has biased composition (polar residues). The disordered stretch occupies residues 301-322 (PQPFSSGTTATQPQTDISAQKT).

Belongs to the FlgI family. The basal body constitutes a major portion of the flagellar organelle and consists of four rings (L,P,S, and M) mounted on a central rod.

It localises to the periplasm. The protein resides in the bacterial flagellum basal body. In terms of biological role, assembles around the rod to form the L-ring and probably protects the motor/basal body from shearing forces during rotation. This Allorhizobium ampelinum (strain ATCC BAA-846 / DSM 112012 / S4) (Agrobacterium vitis (strain S4)) protein is Flagellar P-ring protein.